The sequence spans 712 residues: tRNA 5-methylaminomethyl-2-thiouridine biosynthesis bifunctional protein MnmC (712 aa).

The tRNA (mnm(5)s(2)U34)-methyltransferase stretch occupies residues 1–268 (MPNMRHRVNS…RRALRHAQSD (268 aa)). Positions 292–712 (IGGGVASTHL…MRKLIKGKAL (421 aa)) are FAD-dependent cmnm(5)s(2)U34 oxidoreductase.

The protein in the N-terminal section; belongs to the methyltransferase superfamily. tRNA (mnm(5)s(2)U34)-methyltransferase family. It in the C-terminal section; belongs to the DAO family. The cofactor is FAD.

The protein resides in the cytoplasm. The enzyme catalyses 5-aminomethyl-2-thiouridine(34) in tRNA + S-adenosyl-L-methionine = 5-methylaminomethyl-2-thiouridine(34) in tRNA + S-adenosyl-L-homocysteine + H(+). In terms of biological role, catalyzes the last two steps in the biosynthesis of 5-methylaminomethyl-2-thiouridine (mnm(5)s(2)U) at the wobble position (U34) in tRNA. Catalyzes the FAD-dependent demodification of cmnm(5)s(2)U34 to nm(5)s(2)U34, followed by the transfer of a methyl group from S-adenosyl-L-methionine to nm(5)s(2)U34, to form mnm(5)s(2)U34. This chain is tRNA 5-methylaminomethyl-2-thiouridine biosynthesis bifunctional protein MnmC, found in Shewanella sediminis (strain HAW-EB3).